Consider the following 442-residue polypeptide: Proline--tRNA ligase (442 aa).

This sequence belongs to the class-II aminoacyl-tRNA synthetase family. ProS type 2 subfamily. As to quaternary structure, homodimer.

The protein localises to the cytoplasm. The catalysed reaction is tRNA(Pro) + L-proline + ATP = L-prolyl-tRNA(Pro) + AMP + diphosphate. In terms of biological role, catalyzes the attachment of proline to tRNA(Pro) in a two-step reaction: proline is first activated by ATP to form Pro-AMP and then transferred to the acceptor end of tRNA(Pro). The sequence is that of Proline--tRNA ligase from Brucella ovis (strain ATCC 25840 / 63/290 / NCTC 10512).